The sequence spans 426 residues: Serine--tRNA ligase (426 aa).

233–235 (TAE) provides a ligand contact to L-serine. 264-266 (RSE) provides a ligand contact to ATP. Glu-287 lines the L-serine pocket. ATP is bound at residue 351-354 (EISS). Position 387 (Ser-387) interacts with L-serine.

This sequence belongs to the class-II aminoacyl-tRNA synthetase family. Type-1 seryl-tRNA synthetase subfamily. In terms of assembly, homodimer. The tRNA molecule binds across the dimer.

The protein localises to the cytoplasm. It carries out the reaction tRNA(Ser) + L-serine + ATP = L-seryl-tRNA(Ser) + AMP + diphosphate + H(+). The enzyme catalyses tRNA(Sec) + L-serine + ATP = L-seryl-tRNA(Sec) + AMP + diphosphate + H(+). The protein operates within aminoacyl-tRNA biosynthesis; selenocysteinyl-tRNA(Sec) biosynthesis; L-seryl-tRNA(Sec) from L-serine and tRNA(Sec): step 1/1. Catalyzes the attachment of serine to tRNA(Ser). Is also able to aminoacylate tRNA(Sec) with serine, to form the misacylated tRNA L-seryl-tRNA(Sec), which will be further converted into selenocysteinyl-tRNA(Sec). The protein is Serine--tRNA ligase of Pseudomonas putida (strain ATCC 47054 / DSM 6125 / CFBP 8728 / NCIMB 11950 / KT2440).